A 283-amino-acid polypeptide reads, in one-letter code: Pantothenate synthetase (283 aa).

Position 26–33 (M26–H33) interacts with ATP. The active-site Proton donor is H33. A (R)-pantoate-binding site is contributed by Q57. Beta-alanine is bound at residue Q57. An ATP-binding site is contributed by G148 to D151. (R)-pantoate is bound at residue Q154. ATP contacts are provided by residues A177 and L185–R188.

Belongs to the pantothenate synthetase family. Homodimer.

Its subcellular location is the cytoplasm. The catalysed reaction is (R)-pantoate + beta-alanine + ATP = (R)-pantothenate + AMP + diphosphate + H(+). Its pathway is cofactor biosynthesis; (R)-pantothenate biosynthesis; (R)-pantothenate from (R)-pantoate and beta-alanine: step 1/1. Its function is as follows. Catalyzes the condensation of pantoate with beta-alanine in an ATP-dependent reaction via a pantoyl-adenylate intermediate. The polypeptide is Pantothenate synthetase (Delftia acidovorans (strain DSM 14801 / SPH-1)).